Consider the following 189-residue polypeptide: Chitin synthase 1 (189 aa).

Belongs to the chitin synthase family.

The protein resides in the cell membrane. The enzyme catalyses [(1-&gt;4)-N-acetyl-beta-D-glucosaminyl](n) + UDP-N-acetyl-alpha-D-glucosamine = [(1-&gt;4)-N-acetyl-beta-D-glucosaminyl](n+1) + UDP + H(+). Functionally, polymerizes chitin, a structural polymer of the cell wall and septum, by transferring the sugar moiety of UDP-GlcNAc to the non-reducing end of the growing chitin polymer. The sequence is that of Chitin synthase 1 (CHS1) from Xylohypha bantiana.